The sequence spans 166 residues: Anaerobic nitrite reductase NSHB1 (166 aa).

The 151-residue stretch at 13–163 (SFSEEQEALV…LVAAIKQEMK (151 aa)) folds into the Globin domain. The Homodimerization motif lies at 46 to 50 (EVAPS). Heme b-binding residues include S56, K70, H74, R104, T108, and H109. A Homodimerization motif is present at residues 116–128 (DAHFEVVKFALLD).

This sequence belongs to the plant globin family. Homodimer. Heme b is required as a cofactor. Expressed in coleoptiles, embryos, leaves, seminal roots and roots.

The protein resides in the cytoplasm. It localises to the nucleus. The catalysed reaction is Fe(III)-heme b-[protein] + nitric oxide + H2O = Fe(II)-heme b-[protein] + nitrite + 2 H(+). Slowly reduced by ascorbic acid (AA); this reaction may become a source of nitric oxide (NO) during hypoxia. Functionally, phytoglobin that reduces nitrite to nitric oxide under anoxic conditions (e.g. during flooding or in waterlogged soil). May not function as an oxygen storage or transport protein. Has an unusually high affinity for O(2) through a hexacoordinate heme iron because of a very low dissociation constant. In Oryza sativa subsp. japonica (Rice), this protein is Anaerobic nitrite reductase NSHB1.